The chain runs to 241 residues: 7-cyano-7-deazaguanine synthase (241 aa).

9 to 19 lines the ATP pocket; that stretch reads LSGGLDSSTVL. 4 residues coordinate Zn(2+): cysteine 189, cysteine 197, cysteine 200, and cysteine 203.

Belongs to the QueC family. The cofactor is Zn(2+).

The catalysed reaction is 7-carboxy-7-deazaguanine + NH4(+) + ATP = 7-cyano-7-deazaguanine + ADP + phosphate + H2O + H(+). It participates in purine metabolism; 7-cyano-7-deazaguanine biosynthesis. Its function is as follows. Catalyzes the ATP-dependent conversion of 7-carboxy-7-deazaguanine (CDG) to 7-cyano-7-deazaguanine (preQ(0)). This chain is 7-cyano-7-deazaguanine synthase, found in Thermoplasma volcanium (strain ATCC 51530 / DSM 4299 / JCM 9571 / NBRC 15438 / GSS1).